A 446-amino-acid polypeptide reads, in one-letter code: Glutamine synthetase (446 aa).

The 88-residue stretch at 15–102 (RDIRFVRLWF…MFCDITMPDG (88 aa)) folds into the GS beta-grasp domain. The 338-residue stretch at 109 to 446 (SRHVLRRQLA…PYELKNYLSL (338 aa)) folds into the GS catalytic domain. Glu132 and Glu134 together coordinate Mg(2+). Glu184 provides a ligand contact to ATP. The Mg(2+) site is built by Glu189 and Glu196. Gly241 lines the L-glutamate pocket. A Mg(2+)-binding site is contributed by His245. Residues 247-249 (HMS) and Ser249 contribute to the ATP site. L-glutamate is bound by residues Arg298, Glu304, and Arg316. ATP contacts are provided by Arg316 and Arg321. Mg(2+) is bound at residue Glu336. Position 338 (Arg338) interacts with L-glutamate. Residue Lys363 forms an Isoglutamyl lysine isopeptide (Lys-Gln) (interchain with Q-Cter in protein Pup) linkage.

Belongs to the glutamine synthetase family. In terms of assembly, oligomer of 12 subunits arranged in the form of two hexagons. In its feedback-inhibited form, interacts with TnrA in order to block its DNA-binding activity. Requires Mg(2+) as cofactor.

It localises to the cytoplasm. It carries out the reaction L-glutamate + NH4(+) + ATP = L-glutamine + ADP + phosphate + H(+). Inhibited by glutamine. Glutamine synthetase (GS) is an unusual multitasking protein that functions as an enzyme, a transcription coregulator, and a chaperone in ammonium assimilation and in the regulation of genes involved in nitrogen metabolism. It catalyzes the ATP-dependent biosynthesis of glutamine from glutamate and ammonia. Feedback-inhibited GlnA also interacts with and regulates the activity of the transcriptional regulator TnrA. During nitrogen limitation, TnrA is in its DNA-binding active state and turns on the transcription of genes required for nitrogen assimilation. Under conditions of nitrogen excess, feedback-inhibited GlnA forms a stable complex with TnrA, which inhibits its DNA-binding activity. In contrast, feedback-inhibited GlnA acts as a chaperone to stabilize the DNA-binding activity of GlnR, which represses the transcription of nitrogen assimilation genes. The sequence is that of Glutamine synthetase from Mycolicibacterium smegmatis (strain ATCC 700084 / mc(2)155) (Mycobacterium smegmatis).